A 95-amino-acid polypeptide reads, in one-letter code: uncharacterized protein (95 aa).

Helical transmembrane passes span tyrosine 3–phenylalanine 23, isoleucine 35–threonine 55, and methionine 63–isoleucine 83.

It localises to the cell membrane. This is an uncharacterized protein from Mycoplasma pneumoniae (strain ATCC 29342 / M129 / Subtype 1) (Mycoplasmoides pneumoniae).